The chain runs to 287 residues: Maleylpyruvate hydrolase (287 aa).

Residues E143, E145, and D174 each coordinate a divalent metal cation.

It belongs to the FAH family. In terms of assembly, homodimer.

The enzyme catalyses 3-maleylpyruvate + H2O = maleate + pyruvate + H(+). With respect to regulation, activated by Mn(2+). Inhibited by Ni(2+), Cd(2+), Co(2+) or Cu(2+). In terms of biological role, involved in the degradation of gentisate. Catalyzes the hydrolysis of 3-maleylpyruvate, the ring-cleavage product of gentisate. The chain is Maleylpyruvate hydrolase from Aquipseudomonas alcaligenes (Pseudomonas alcaligenes).